We begin with the raw amino-acid sequence, 931 residues long: Protein translocase subunit SecA (931 aa).

Residues Gln87, 105–109, and Asp515 each bind ATP; that span reads GEGKT. Zn(2+)-binding residues include Cys915, Cys917, Cys926, and His927.

This sequence belongs to the SecA family. As to quaternary structure, monomer and homodimer. Part of the essential Sec protein translocation apparatus which comprises SecA, SecYEG and auxiliary proteins SecDF-YajC and YidC. It depends on Zn(2+) as a cofactor.

It is found in the cell inner membrane. Its subcellular location is the cytoplasm. It catalyses the reaction ATP + H2O + cellular proteinSide 1 = ADP + phosphate + cellular proteinSide 2.. Functionally, part of the Sec protein translocase complex. Interacts with the SecYEG preprotein conducting channel. Has a central role in coupling the hydrolysis of ATP to the transfer of proteins into and across the cell membrane, serving both as a receptor for the preprotein-SecB complex and as an ATP-driven molecular motor driving the stepwise translocation of polypeptide chains across the membrane. The polypeptide is Protein translocase subunit SecA (Burkholderia pseudomallei (strain K96243)).